A 1381-amino-acid polypeptide reads, in one-letter code: MANNTTSALHPRGSGQRCVYDTVLRFGDPDARRRGFQLDEVSHNKLCDIFDSGPLHFAFGDLKVMKVAGGVVTPHKTVVKTVYVSGVQEGNDYVTFAFTPGPNEWREVDPRIDKRTALVGVLVQEHKKLDSDLKESRRELSQLKLEHSLLRHDYERLVREKPGPAMRTFKFSAVIFYAFFLGFLLMSAVKGEVYGRCLDSELNLNGNPEVCLHWEEVKSFSLQVALADFWNMTLDYYATVAPQSPLMDLALGYFPYFANWHMAAFLVGTAHVVAAERPLYMLVTLVLATLSRFQLVALAAVPMLDMPSSIGLWVTMVLFAIDQAFAILASVLISVLLLILCLAMNDVDYGALLRGCVTLVSATVFSHLVSFLHAPGWFTIIAILIYRIPKVLSYVSAERVDIKGPDGKIKETQNANPSWITKMSGLKNFFQRAFRQKVRTGVNPTTRIIPNSLVVIDAKDGRGTGFRVRNYLVTAGHVVGADTTVRVRWADVTSFAHVVYRVPNKDIVLLTLPAEYNSLHSYKLAKEVVDGTVVVVSNGDGGALSVGISEGVIVGESMTYAINTADGMSGSPLTTTDGRLIGVHQQNTGFTGGAVIFRDTDFPQPKKPQREADLEAKVAELEKALAAYTQSATGEDIVGLVRVAIQREMEVLRKELSNEFGQAKGKTKHKRRIMAAARSGGKRKPGKVWTEEEYKKLLEEGFTRDQLREMAEAAREADDDFDDYEEEKNEVDYPVWSDHDSDEEIDRDWFGQNLPTWSSAWSDFEPELDPDVTKTLPCHLEDKFSLKHYIITEADLKHFGQEMKEYMDHLDAVIKTHTEKGKWCPNTNTEEILKDLNAMWFKLNHTMWKNGVAPFMQRKKQKPKKREEGPERGPINPDEMRLDHWEKMMAPPDAGRRLVPDDYPVIGKLPINRPISDWDEPVDDLLNLLPPAPDSSAYGPAVWGPEAYVKSFEKFTYAKPRDSIKRDFPREWKFACQVLRREFDFLEGSVIMDITATSKNADSTCAYPKCNYWKTEAEYLSERGYQDYVSEYKRIHGGARPKVLWLLFLKKEILKVKKINDSDIRQIVCADPIFARIGNAFEEHQNTLMKHRTATRMPQCGWTPFFNGFKRRIERLLSRKNSVFIEFDWTRYDGTIPREIFAKIKSFRFSCLAEEFQTDANRAMYQWYCDSLLDRYVLMPSGEVTRQTKGNPSGQISTTMDNNLCNVFFQAFEYAYIHPEKSIEELRESWDRCDSLIYGDDRLTTFDHVPPDYVDRVVHMYKDVFGMWVKPEKVIVSDTPVGLSFCGFTVGPDLMPVPTDCDKLVASLVTPTKKLQDIVALYSKVLCYRILGHNLSDEHEFKRYVRVALEVLARHIRNLGGEEPVHVTERLLDKLWRGGPK.

The stretch at 121–160 forms a coiled coil; the sequence is VLVQEHKKLDSDLKESRRELSQLKLEHSLLRHDYERLVRE. Helical transmembrane passes span 169–189, 249–269, 279–299, 324–344, and 365–385; these read FKFS…MSAV, LALG…LVGT, LYML…VALA, AFAI…CLAM, and FSHL…AILI. Residues histidine 477, aspartate 506, and serine 569 each act as charge relay system; for serine protease activity in the active site. Tyrosine 694 is subject to O-(5'-phospho-RNA)-tyrosine. Positions 703 to 732 form a coiled coil; the sequence is TRDQLREMAEAAREADDDFDDYEEEKNEVD. A disordered region spans residues 856–879; that stretch reads MQRKKQKPKKREEGPERGPINPDE. The 133-residue stretch at 1122-1254 folds into the RdRp catalytic domain; the sequence is SVFIEFDWTR…TFDHVPPDYV (133 aa).

Belongs to the astroviridae polyprotein 1AB family. In terms of assembly, monomer. In terms of processing, cleaved by the viral and host proteases. The protease is probably autocatalytically cleaved.

The protein localises to the host membrane. It carries out the reaction RNA(n) + a ribonucleoside 5'-triphosphate = RNA(n+1) + diphosphate. In terms of biological role, responsible for the cleavage of the polyprotein into functional products. Protein covalently attached to the 5' extremity of the genomic and subgenomic RNAs. It may serve as a primer for the replicase. The polypeptide is Non-structural polyprotein 1AB (ORF1) (Neovison vison (American mink)).